Here is an 809-residue protein sequence, read N- to C-terminus: F-BAR domain only protein 2 (809 aa).

One can recognise an F-BAR domain in the interval 3–250 (MAHFVENFWG…NMANTTIESL (248 aa)). The interval 3–274 (MAHFVENFWG…PGLIEFEECD (272 aa)) is mediates dimerization and binding to membranes enriched in Pi(4,5)-P2 and induces their tubulation. Residues 87-156 (HLDLVRKLQE…CVEQERLKKE (70 aa)) are a coiled coil. Lysine 297 is covalently cross-linked (Glycyl lysine isopeptide (Lys-Gly) (interchain with G-Cter in SUMO2)). The interval 301-352 (DAESVECPDADSLNIPDVDEEGFSIKPEANQNDTKENHFYSSSDSDSEDEEP) is disordered. Serine 312 is subject to Phosphoserine. Threonine 385 carries the phosphothreonine modification. 4 positions are modified to phosphoserine: serine 387, serine 394, serine 402, and serine 403. The span at 390 to 416 (VSRHSPVQMNRNSSNEELTKSKPSSLP) shows a compositional bias: polar residues. Disordered stretches follow at residues 390 to 422 (VSRH…KGTN) and 435 to 536 (LESS…PVSL). Residues 435 to 456 (LESSSAPLTSSSSARPTTPLSL) show a composition bias toward low complexity. A phosphoserine mark is found at serine 487, serine 492, serine 495, serine 507, serine 509, serine 510, and serine 532. The segment covering 501 to 520 (PLARAESSSSISSSASLSAA) has biased composition (low complexity). The tract at residues 520–809 (ANTPTVGVSR…FATGRYLADC (290 aa)) is mediates interaction with DAB2, EPS15, EPS15R and ITSN1. The region spanning 541 to 808 (TLPVAIALTE…RFATGRYLAD (268 aa)) is the MHD domain.

The protein belongs to the FCHO family. Homodimer; disulfide-linked. May form homotetramer. Interacts with AP2A1. Interacts with EPS15, EPS15R, ITSN1 and ITSN2; recruit those scaffolding proteins which in turn may interact with the adaptor protein complex AP-2 at the plasma membrane. Interacts with DAB2 (via DPF motifs); mediates LDL receptor/LDLR endocytosis. Ubiquitinated. Mainly undergoes monoubiquitination but also polyubiquitination. Ubiquitously expressed (at protein level).

It localises to the membrane. Its subcellular location is the clathrin-coated pit. Its function is as follows. Functions in an early step of clathrin-mediated endocytosis. Has both a membrane binding/bending activity and the ability to recruit proteins essential to the formation of functional clathrin-coated pits. Has a lipid-binding activity with a preference for membranes enriched in phosphatidylserine and phosphoinositides (Pi(4,5) biphosphate) like the plasma membrane. Its membrane-bending activity might be important for the subsequent action of clathrin and adaptors in the formation of clathrin-coated vesicles. Involved in adaptor protein complex AP-2-dependent endocytosis of the transferrin receptor, it also functions in the AP-2-independent endocytosis of the LDL receptor. The sequence is that of F-BAR domain only protein 2 (Fcho2) from Mus musculus (Mouse).